The chain runs to 514 residues: Glucose-6-phosphate 1-dehydrogenase 2 (514 aa).

Residues arginine 69 and lysine 176 each contribute to the NADP(+) site. Histidine 206, lysine 210, glutamate 244, and aspartate 263 together coordinate substrate. Histidine 268 serves as the catalytic Proton acceptor. Lysine 366 contributes to the substrate binding site.

It belongs to the glucose-6-phosphate dehydrogenase family.

The enzyme catalyses D-glucose 6-phosphate + NADP(+) = 6-phospho-D-glucono-1,5-lactone + NADPH + H(+). The protein operates within carbohydrate degradation; pentose phosphate pathway; D-ribulose 5-phosphate from D-glucose 6-phosphate (oxidative stage): step 1/3. Its function is as follows. Catalyzes the oxidation of glucose 6-phosphate to 6-phosphogluconolactone. In Mycobacterium bovis (strain ATCC BAA-935 / AF2122/97), this protein is Glucose-6-phosphate 1-dehydrogenase 2.